We begin with the raw amino-acid sequence, 288 residues long: Shikimate dehydrogenase (NADP(+)) (288 aa).

Shikimate is bound by residues 22 to 24 (SLS) and Thr69. Lys73 serves as the catalytic Proton acceptor. Asn94 and Asp110 together coordinate shikimate. Residues 131–135 (GSGGA) and Leu228 contribute to the NADP(+) site. Tyr230 lines the shikimate pocket. Gly251 lines the NADP(+) pocket.

Belongs to the shikimate dehydrogenase family. As to quaternary structure, homodimer.

It catalyses the reaction shikimate + NADP(+) = 3-dehydroshikimate + NADPH + H(+). It participates in metabolic intermediate biosynthesis; chorismate biosynthesis; chorismate from D-erythrose 4-phosphate and phosphoenolpyruvate: step 4/7. In terms of biological role, involved in the biosynthesis of the chorismate, which leads to the biosynthesis of aromatic amino acids. Catalyzes the reversible NADPH linked reduction of 3-dehydroshikimate (DHSA) to yield shikimate (SA). The sequence is that of Shikimate dehydrogenase (NADP(+)) from Synechococcus sp. (strain JA-2-3B'a(2-13)) (Cyanobacteria bacterium Yellowstone B-Prime).